A 386-amino-acid polypeptide reads, in one-letter code: Nucleosome assembly protein 1-like 4 (386 aa).

The tract at residues 1–29 is disordered; sequence MADNSFSDGVPSDSLEAAKNASNTEKLTD. Ala2 bears the N-acetylalanine mark. Residues Ser5, Ser7, and Ser12 each carry the phosphoserine modification. Positions 20-29 are enriched in polar residues; that stretch reads NASNTEKLTD. The residue at position 49 (Ser49) is a Phosphoserine. Thr51 carries the phosphothreonine modification. 2 positions are modified to phosphoserine: Ser53 and Ser54. Position 58 is a phosphothreonine (Thr58). Lys105 is subject to N6-acetyllysine. Ser125 carries the post-translational modification Phosphoserine. N6-acetyllysine is present on Lys146. The Nuclear localization signal signature appears at 265-271; that stretch reads IKKKQKH. Phosphoserine is present on Ser304. Over residues 339-370 the composition is skewed to acidic residues; sequence AIEDDDNFEEGEEGEEEELEGDEEAEDDDDAE. The segment at 339 to 386 is disordered; the sequence is AIEDDDNFEEGEEGEEEELEGDEEAEDDDDAEINPKKEPSQPSECKQQ.

The protein belongs to the nucleosome assembly protein (NAP) family. As to quaternary structure, interacts with core (H2A, H2B, H3, H4) and linker (H1) histones. Post-translationally, polyglutamylated and polyglycylated. These 2 modifications occur exclusively on glutamate residues and result in either polyglutamate or polyglycine chains on the gamma-carboxyl group. Both modifications can coexist on the same protein on adjacent residues, and lowering polyglycylation levels increases polyglutamylation, and reciprocally. Polyglutamylated by TTLL4. In terms of processing, phosphorylated at the G0/G1 boundary but it is not phosphorylated in S-phase. Phosphorylated protein remains in the cytoplasm in a complex with histones during the G0/G1 transition, whereas dephosphorylation triggers its transport into the nucleus at the G1/S-boundary.

Its subcellular location is the nucleus. The protein resides in the cytoplasm. In terms of biological role, acts as a histone chaperone in nucleosome assembly. This is Nucleosome assembly protein 1-like 4 (NAP1L4) from Bos taurus (Bovine).